A 147-amino-acid polypeptide reads, in one-letter code: Hemoglobin subunit epsilon (147 aa).

The 145-residue stretch at 3–147 folds into the Globin domain; the sequence is HFTAEEKAAV…VAIALAHKYH (145 aa). Serine 14 and serine 51 each carry phosphoserine. Residues histidine 64 and histidine 93 each contribute to the heme b site.

The protein belongs to the globin family. In terms of assembly, heterotetramer of two alpha chains and two epsilon chains in early embryonic hemoglobin Gower-2; two zeta chains and two epsilon chains in early embryonic hemoglobin Gower-1. Red blood cells.

Its function is as follows. The epsilon chain is a beta-type chain of early mammalian embryonic hemoglobin. The polypeptide is Hemoglobin subunit epsilon (HBE1) (Pan troglodytes (Chimpanzee)).